The sequence spans 117 residues: uncharacterized protein (117 aa).

Positions Met1–Ala23 are cleaved as a signal peptide.

This is an uncharacterized protein from Archaeoglobus fulgidus (strain ATCC 49558 / DSM 4304 / JCM 9628 / NBRC 100126 / VC-16).